A 154-amino-acid polypeptide reads, in one-letter code: Putative pre-16S rRNA nuclease (154 aa).

It belongs to the YqgF nuclease family.

It localises to the cytoplasm. Could be a nuclease involved in processing of the 5'-end of pre-16S rRNA. The chain is Putative pre-16S rRNA nuclease from Rickettsia rickettsii (strain Iowa).